Reading from the N-terminus, the 217-residue chain is MOB kinase activator 3A (217 aa).

Cysteine 83, cysteine 88, histidine 165, and histidine 170 together coordinate Zn(2+).

This sequence belongs to the MOB1/phocein family.

In terms of biological role, may regulate the activity of kinases. This chain is MOB kinase activator 3A (MOB3A), found in Homo sapiens (Human).